A 353-amino-acid polypeptide reads, in one-letter code: tRNA-specific 2-thiouridylase MnmA 2 (353 aa).

ATP-binding positions include 9-16 (AMSGGVDS) and Met-35. Cys-98 functions as the Nucleophile in the catalytic mechanism. Cys-98 and Cys-194 are joined by a disulfide. Residue Gly-122 participates in ATP binding. The segment at 144 to 146 (KDQ) is interaction with tRNA. The active-site Cysteine persulfide intermediate is the Cys-194. An interaction with tRNA region spans residues 300–301 (RY).

Belongs to the MnmA/TRMU family.

The protein localises to the cytoplasm. The enzyme catalyses S-sulfanyl-L-cysteinyl-[protein] + uridine(34) in tRNA + AH2 + ATP = 2-thiouridine(34) in tRNA + L-cysteinyl-[protein] + A + AMP + diphosphate + H(+). Catalyzes the 2-thiolation of uridine at the wobble position (U34) of tRNA, leading to the formation of s(2)U34. The polypeptide is tRNA-specific 2-thiouridylase MnmA 2 (Clostridium botulinum (strain Langeland / NCTC 10281 / Type F)).